Reading from the N-terminus, the 398-residue chain is MMLKGITRLISRIHKLDPGRFLHMGTQARQSIAAHLDNQVPVESPRAISRTNENDPAKHGDQHEGQHYNISPQDLETVFPHGLPPRFVMQVKTFSEACLMVRKPALELLHYLKNTSFAYPAIRYLLYGEKGTGKTLSLCHVIHFCAKQDWLILHIPDAHLWVKNCRDLLQSSYNKQRFDQPLEASTWLKNFKTTNERFLNQIKVQEKYVWNKRESTEKGSPLGEVVEQGITRVRNATDAVGIVLKELKRQSSLGMFHLLVAVDGINALWGRTTLKREDKSPIAPEELALVHNLRKMMKNDWHGGAIVSALSQTGSLFKPRKAYLPQELLGKEGFDALDPFIPILVSNYNPKEFESCIQYYLENNWLQHEKAPTEEGKKELLFLSNANPSLLERHCAYL.

A mitochondrion-targeting transit peptide spans 1–21 (MMLKGITRLISRIHKLDPGRF). The tract at residues 39 to 67 (QVPVESPRAISRTNENDPAKHGDQHEGQH) is disordered. Residues 52–66 (NENDPAKHGDQHEGQ) are compositionally biased toward basic and acidic residues. GTP-binding positions include Met100 and 128–135 (GEKGTGKT). N6-acetyllysine occurs at positions 175 and 207.

Belongs to the mitochondrion-specific ribosomal protein mS29 family. As to quaternary structure, component of the mitochondrial small ribosomal subunit (mt-SSU). Mature mammalian 55S mitochondrial ribosomes consist of a small (28S) and a large (39S) subunit. The 28S small subunit contains a 12S ribosomal RNA (12S mt-rRNA) and 30 different proteins. The 39S large subunit contains a 16S rRNA (16S mt-rRNA), a copy of mitochondrial valine transfer RNA (mt-tRNA(Val)), which plays an integral structural role, and 52 different proteins. Interacts with DELE1. Interacts with NOA1. In terms of tissue distribution, ubiquitous.

Its subcellular location is the mitochondrion. It catalyses the reaction GTP + H2O = GDP + phosphate + H(+). As a component of the mitochondrial small ribosomal subunit, it plays a role in the translation of mitochondrial mRNAs. Involved in mediating interferon-gamma-induced cell death. Displays GTPase activity in vitro. The protein is Small ribosomal subunit protein mS29 of Homo sapiens (Human).